Reading from the N-terminus, the 408-residue chain is Multidrug resistance protein MdtG (408 aa).

Transmembrane regions (helical) follow at residues 16–36 (LIVA…VMPF), 58–78 (IVFS…GGLA), 92–112 (LGMG…QFLI), 115–135 (ALLG…ATQV), 146–166 (TLST…GLLA), 173–193 (PVFF…LFCI), 224–244 (LFVT…ILTL), 256–276 (VAFI…LSAP), 290–310 (ILIT…YVQT), 319–339 (FLLG…LVYN), and 378–398 (AVFL…WNSL).

It belongs to the major facilitator superfamily. DHA1 family. MdtG (TC 2.A.1.2.20) subfamily.

It is found in the cell inner membrane. Confers resistance to fosfomycin and deoxycholate. This chain is Multidrug resistance protein MdtG, found in Escherichia coli O6:K15:H31 (strain 536 / UPEC).